The chain runs to 265 residues: Probable FAD synthase (265 aa).

The protein belongs to the PAPS reductase family. FAD1 subfamily.

The enzyme catalyses FMN + ATP + H(+) = FAD + diphosphate. Its pathway is cofactor biosynthesis; FAD biosynthesis; FAD from FMN: step 1/1. Adenylates FMN to FAD. The chain is Probable FAD synthase from Schizosaccharomyces pombe (strain 972 / ATCC 24843) (Fission yeast).